The sequence spans 463 residues: A-type ATP synthase subunit B (463 aa).

The protein belongs to the ATPase alpha/beta chains family. In terms of assembly, has multiple subunits with at least A(3), B(3), C, D, E, F, H, I and proteolipid K(x).

The protein resides in the cell membrane. Functionally, component of the A-type ATP synthase that produces ATP from ADP in the presence of a proton gradient across the membrane. The B chain is a regulatory subunit. This is A-type ATP synthase subunit B from Thermococcus sp. (strain KI).